A 140-amino-acid polypeptide reads, in one-letter code: MAQPGKPQSVLELSRLLNIPLDDCVVPCNFCKRFLSYTELTDFDTKCLSLIWKDDFVFACCRYCCVATAAFEFENYFVESVIGWEIEQKENTPLSDIIVRCHHCLKLLNQIEKLDICGRSELFHKVRRGWKGLCRQCKQI.

Zinc fingers lie at residues cysteine 28–cysteine 64 and cysteine 101–cysteine 137.

The protein belongs to the papillomaviridae E6 protein family. Forms homodimers. Interacts with ubiquitin-protein ligase UBE3A/E6-AP; this interaction stimulates UBE3A ubiquitin activity. Interacts with host BAK1.

The protein resides in the host cytoplasm. The protein localises to the host nucleus. Functionally, plays a major role in the induction and maintenance of cellular transformation. E6 associates with host UBE3A/E6-AP ubiquitin-protein ligase and modulates its activity. Protects host keratinocytes from apoptosis by mediating the degradation of host BAK1. May also inhibit host immune response. This Human papillomavirus 24 protein is Protein E6.